Consider the following 362-residue polypeptide: Zinc transporter 9 (362 aa).

An N-terminal signal peptide occupies residues 1 to 21 (MAFDLKLTACLLLAVFSLAAA). The Extracellular portion of the chain corresponds to 22–42 (ADCECQPSDEGHDAAKSRTLK). The helical transmembrane segment at 43 to 63 (VIAIFCILVGSSAGCAIPSLG) threads the bilayer. Over 64 to 74 (RRFPALRPDTS) the chain is Cytoplasmic. The chain crosses the membrane as a helical span at residues 75 to 95 (LFFALKAFAAGVILATAFVHI). Residues 96–120 (LPVSFDKLGSPCLVDGPWRKYPFTG) lie on the Extracellular side of the membrane. Residues 121-141 (LVAMLAAVATLLLDTIATGYF) traverse the membrane as a helical segment. Residues 142–207 (LQRAQDSRGA…EDRAKLVRHR (66 aa)) are Cytoplasmic-facing. Residues 208–228 (VISQVFELGIIVHSIIIGISL) form a helical membrane-spanning segment. The Extracellular portion of the chain corresponds to 229–239 (GASESPSTIRP). A helical membrane pass occupies residues 240 to 260 (LVAALTFHQFFEGIGLGGCIV). The Cytoplasmic segment spans residues 261–269 (QARFHLKSA). Residues 270-290 (VTMAIFFSLTTPVGIMIGIGI) form a helical membrane-spanning segment. Residues 291 to 301 (SSAYNENSPTA) are Extracellular-facing. Residues 302-322 (LIVEGILDAAAAGILNYMALV) form a helical membrane-spanning segment. Residues 323–341 (DLLAEDFMNPRVRKSGRLQ) are Cytoplasmic-facing. A helical membrane pass occupies residues 342-362 (LIISILLLVGIALMSLLGIWA).

Belongs to the ZIP transporter (TC 2.A.5) family.

The protein resides in the cell membrane. Zinc transporter that may be involved in zinc uptake from the rhizosphere. This Oryza sativa subsp. japonica (Rice) protein is Zinc transporter 9 (ZIP9).